A 118-amino-acid polypeptide reads, in one-letter code: MIDLIKYPVINFKSYRALVLNNQYMFNVDLRLTKPQIKKLIEQYFEVNVISVNTHRPPRKKRLYIQTSPGYKKRYKRVIITLQKDQEIPYIKSLMASNLAAAMQRVQNAQTSPNSNEA.

This sequence belongs to the universal ribosomal protein uL23 family. Part of the 50S ribosomal subunit.

It is found in the plastid. The protein localises to the chloroplast. Functionally, binds to 23S rRNA. This Stigeoclonium helveticum (Green alga) protein is Large ribosomal subunit protein uL23c (rpl23).